The following is a 475-amino-acid chain: Aspartyl/glutamyl-tRNA(Asn/Gln) amidotransferase subunit B (475 aa).

The protein belongs to the GatB/GatE family. GatB subfamily. As to quaternary structure, heterotrimer of A, B and C subunits.

The catalysed reaction is L-glutamyl-tRNA(Gln) + L-glutamine + ATP + H2O = L-glutaminyl-tRNA(Gln) + L-glutamate + ADP + phosphate + H(+). The enzyme catalyses L-aspartyl-tRNA(Asn) + L-glutamine + ATP + H2O = L-asparaginyl-tRNA(Asn) + L-glutamate + ADP + phosphate + 2 H(+). In terms of biological role, allows the formation of correctly charged Asn-tRNA(Asn) or Gln-tRNA(Gln) through the transamidation of misacylated Asp-tRNA(Asn) or Glu-tRNA(Gln) in organisms which lack either or both of asparaginyl-tRNA or glutaminyl-tRNA synthetases. The reaction takes place in the presence of glutamine and ATP through an activated phospho-Asp-tRNA(Asn) or phospho-Glu-tRNA(Gln). The polypeptide is Aspartyl/glutamyl-tRNA(Asn/Gln) amidotransferase subunit B (Hydrogenovibrio crunogenus (strain DSM 25203 / XCL-2) (Thiomicrospira crunogena)).